A 377-amino-acid polypeptide reads, in one-letter code: MNHSDTLSLSLELLQQPSVTPIDHTCQTIMADRLAKVGFHIEPMRFGDVDNLWARRGTEGPVFCFAGHTDVVPTGRLDAWNSDPFAPEIRDGKLYGRGSADMKTALAAMVVASERFVAKHPNHKGSIAFLITSDEEGPAVNGTVKVIETLEKRNEKITWCLVGEPSSTHKLGDIVKNGRRGSLNAVLKVQGKQGHVAYPHLARNPIHEASPALAELCQTVWDNGNEYFPATSFQISNIHAGTGATNVIPGALEVTFNFRYSTEVTAEQLKQRVHEILDKHGLQYEIVWNLSGLPFLTPVGELVNAAQTAILNVTGTETELSTSGGTSDGRFIAPTGAQVLELGVLNATIHQINEHVDVHDLDPLTDIYEQILENLLA.

Histidine 68 provides a ligand contact to Zn(2+). The active site involves aspartate 70. A Zn(2+)-binding site is contributed by aspartate 101. The active-site Proton acceptor is glutamate 135. The Zn(2+) site is built by glutamate 136, glutamate 164, and histidine 350.

This sequence belongs to the peptidase M20A family. DapE subfamily. In terms of assembly, homodimer. Requires Zn(2+) as cofactor. Co(2+) serves as cofactor.

The catalysed reaction is N-succinyl-(2S,6S)-2,6-diaminopimelate + H2O = (2S,6S)-2,6-diaminopimelate + succinate. It participates in amino-acid biosynthesis; L-lysine biosynthesis via DAP pathway; LL-2,6-diaminopimelate from (S)-tetrahydrodipicolinate (succinylase route): step 3/3. Catalyzes the hydrolysis of N-succinyl-L,L-diaminopimelic acid (SDAP), forming succinate and LL-2,6-diaminopimelate (DAP), an intermediate involved in the bacterial biosynthesis of lysine and meso-diaminopimelic acid, an essential component of bacterial cell walls. The polypeptide is Succinyl-diaminopimelate desuccinylase (Acinetobacter baumannii (strain AB307-0294)).